Reading from the N-terminus, the 24-residue chain is Brevinin-1La (24 aa).

Cysteines 18 and 24 form a disulfide.

Expressed by the skin glands.

The protein resides in the secreted. Its function is as follows. Antibacterial activity against Gram-positive bacterium S.aureus and Gram-negative bacterium E.coli. The protein is Brevinin-1La of Rana luteiventris (Columbia spotted frog).